Reading from the N-terminus, the 342-residue chain is Isopentenyl-diphosphate delta-isomerase (342 aa).

11 to 12 serves as a coordination point for substrate; that stretch reads RK. FMN is bound by residues Ser-68, 69–71, Ser-99, and Asn-127; that span reads SMT. Residue 99-101 participates in substrate binding; the sequence is SMR. Gln-162 lines the substrate pocket. Glu-163 is a binding site for Mg(2+). Residues Lys-194, Thr-224, 274–276, and 295–296 each bind FMN; these read GFK and AG.

Belongs to the IPP isomerase type 2 family. In terms of assembly, homooctamer. Dimer of tetramers. It depends on FMN as a cofactor. NADPH serves as cofactor. The cofactor is Mg(2+).

It is found in the cytoplasm. It catalyses the reaction isopentenyl diphosphate = dimethylallyl diphosphate. In terms of biological role, involved in the biosynthesis of isoprenoids. Catalyzes the 1,3-allylic rearrangement of the homoallylic substrate isopentenyl (IPP) to its allylic isomer, dimethylallyl diphosphate (DMAPP). The polypeptide is Isopentenyl-diphosphate delta-isomerase (Rickettsia conorii (strain ATCC VR-613 / Malish 7)).